The following is a 490-amino-acid chain: Nuclear distribution protein PAC1 (490 aa).

Residues 65 to 96 are a coiled coil; that stretch reads STVLRLQKKIIDLENEIHNLTNIINTTNSETN. 8 WD repeats span residues 118 to 157, 163 to 204, 205 to 245, 251 to 290, 293 to 327, 328 to 367, 388 to 427, and 436 to 487; these read QCEN…NTIP, AHTR…RTLN, GHEH…CLKS, EWCR…GVAM, GHTH…FPSI, PSEL…LIPH, GHSS…ETGS, and GHEG…NSIK.

The protein belongs to the WD repeat LIS1/nudF family. In terms of assembly, self-associates. Interacts with NDL1 and dynein.

It is found in the cytoplasm. Its subcellular location is the cytoskeleton. The protein resides in the spindle pole. Positively regulates the activity of the minus-end directed microtubule motor protein dynein. Plays a central role in positioning the mitotic spindle at the bud neck during cell division. Targets cytoplasmic dynein to microtubule plus ends, thereby promoting dynein-mediated microtubule sliding along the bud cortex and consequently the movement of the mitotic spindle to the bud neck. In Candida tropicalis (strain ATCC MYA-3404 / T1) (Yeast), this protein is Nuclear distribution protein PAC1.